Reading from the N-terminus, the 509-residue chain is Membrane-bound lytic murein transglycosylase F (509 aa).

Residues 1–40 (MLASACTHSWRTGRFLNRIIKSSVQTLTAAALIANLSACS) form the signal peptide. Residues 41–280 (RPTTLEKIEQ…YLQERYFGHV (240 aa)) are non-LT domain. The segment at 281–509 (NQLNYVGART…APFRVTPPML (229 aa)) is LT domain. Glu-327 is a catalytic residue. A disordered region spans residues 474 to 500 (DGSVAQNEDAPTTGADGTTEETPAIPA).

In the N-terminal section; belongs to the bacterial solute-binding protein 3 family. The protein in the C-terminal section; belongs to the transglycosylase Slt family.

Its subcellular location is the cell outer membrane. It catalyses the reaction Exolytic cleavage of the (1-&gt;4)-beta-glycosidic linkage between N-acetylmuramic acid (MurNAc) and N-acetylglucosamine (GlcNAc) residues in peptidoglycan, from either the reducing or the non-reducing ends of the peptidoglycan chains, with concomitant formation of a 1,6-anhydrobond in the MurNAc residue.. Murein-degrading enzyme that degrades murein glycan strands and insoluble, high-molecular weight murein sacculi, with the concomitant formation of a 1,6-anhydromuramoyl product. Lytic transglycosylases (LTs) play an integral role in the metabolism of the peptidoglycan (PG) sacculus. Their lytic action creates space within the PG sacculus to allow for its expansion as well as for the insertion of various structures such as secretion systems and flagella. This Hahella chejuensis (strain KCTC 2396) protein is Membrane-bound lytic murein transglycosylase F.